We begin with the raw amino-acid sequence, 547 residues long: Chaperonin GroEL (547 aa).

ATP is bound by residues 30–33, Lys-51, 87–91, Gly-415, and Asp-496; these read TLGP and DGTTT.

It belongs to the chaperonin (HSP60) family. In terms of assembly, forms a cylinder of 14 subunits composed of two heptameric rings stacked back-to-back. Interacts with the co-chaperonin GroES.

The protein resides in the cytoplasm. The catalysed reaction is ATP + H2O + a folded polypeptide = ADP + phosphate + an unfolded polypeptide.. Together with its co-chaperonin GroES, plays an essential role in assisting protein folding. The GroEL-GroES system forms a nano-cage that allows encapsulation of the non-native substrate proteins and provides a physical environment optimized to promote and accelerate protein folding. The protein is Chaperonin GroEL of Haemophilus ducreyi (strain 35000HP / ATCC 700724).